Reading from the N-terminus, the 384-residue chain is GTPase Obg (384 aa).

Residues 1-159 (MKFIDEAKIE…RSLQLELKVL (159 aa)) enclose the Obg domain. Residues 20-46 (ATSFRREKFVPRGGPDGGDGGKGGSVW) are disordered. A compositionally biased stretch (gly residues) spans 33–43 (GPDGGDGGKGG). Positions 160-348 (ADVGLLGMPN…LVHQINQYLT (189 aa)) constitute an OBG-type G domain. Residues 166-173 (GMPNAGKS), 191-195 (FTTLH), 213-216 (DIPG), 284-287 (NKLD), and 329-331 (SAL) contribute to the GTP site. Mg(2+) contacts are provided by S173 and T193.

It belongs to the TRAFAC class OBG-HflX-like GTPase superfamily. OBG GTPase family. In terms of assembly, monomer. It depends on Mg(2+) as a cofactor.

It localises to the cytoplasm. An essential GTPase which binds GTP, GDP and possibly (p)ppGpp with moderate affinity, with high nucleotide exchange rates and a fairly low GTP hydrolysis rate. Plays a role in control of the cell cycle, stress response, ribosome biogenesis and in those bacteria that undergo differentiation, in morphogenesis control. The sequence is that of GTPase Obg from Neisseria meningitidis serogroup C (strain 053442).